The primary structure comprises 320 residues: Ferrochelatase (320 aa).

Residues His194 and Glu275 each contribute to the Fe cation site.

This sequence belongs to the ferrochelatase family. As to quaternary structure, monomer.

It is found in the cytoplasm. It carries out the reaction heme b + 2 H(+) = protoporphyrin IX + Fe(2+). It functions in the pathway porphyrin-containing compound metabolism; protoheme biosynthesis; protoheme from protoporphyrin-IX: step 1/1. Catalyzes the ferrous insertion into protoporphyrin IX. This Shigella sonnei (strain Ss046) protein is Ferrochelatase.